Consider the following 177-residue polypeptide: Isopentenyl-diphosphate Delta-isomerase 1 (177 aa).

Positions 24 and 30 each coordinate Mn(2+). The region spanning 28-160 is the Nudix hydrolase domain; sequence SLHRAISIFI…PHAYSFWLEA (133 aa). Residue C65 is part of the active site. C65 contacts Mg(2+). H67 contacts Mn(2+). E85 contacts Mg(2+). Residues E110 and E112 each contribute to the Mn(2+) site. E112 is an active-site residue.

Belongs to the IPP isomerase type 1 family. The cofactor is Mg(2+). Mn(2+) serves as cofactor.

Its subcellular location is the cytoplasm. The catalysed reaction is isopentenyl diphosphate = dimethylallyl diphosphate. The protein operates within isoprenoid biosynthesis; dimethylallyl diphosphate biosynthesis; dimethylallyl diphosphate from isopentenyl diphosphate: step 1/1. Its function is as follows. Catalyzes the 1,3-allylic rearrangement of the homoallylic substrate isopentenyl (IPP) to its highly electrophilic allylic isomer, dimethylallyl diphosphate (DMAPP). This Aromatoleum aromaticum (strain DSM 19018 / LMG 30748 / EbN1) (Azoarcus sp. (strain EbN1)) protein is Isopentenyl-diphosphate Delta-isomerase 1.